The primary structure comprises 144 residues: Large ribosomal subunit protein uL16 (144 aa).

The protein belongs to the universal ribosomal protein uL16 family. As to quaternary structure, part of the 50S ribosomal subunit.

Its function is as follows. Binds 23S rRNA and is also seen to make contacts with the A and possibly P site tRNAs. The chain is Large ribosomal subunit protein uL16 from Erythrobacter litoralis (strain HTCC2594).